The following is a 380-amino-acid chain: Kappa-type opioid receptor (380 aa).

Over 1 to 57 (MGRRRQGPAQPASELPARNACLLPNGSAWLPGWAEPDGNGSAGPQDEQLEPAHISPA) the chain is Extracellular. N-linked (GlcNAc...) asparagine glycans are attached at residues Asn25 and Asn39. A helical transmembrane segment spans residues 58-85 (IPVIITAVYSVVFVVGLVGNSLVMFVII). Over 86-95 (RYTKMKTATN) the chain is Cytoplasmic. The chain crosses the membrane as a helical span at residues 96-119 (IYIFNLALADALVTTTMPFQSTVY). Residues 120 to 132 (LMNSWPFGDVLCK) are Extracellular-facing. Cys131 and Cys210 form a disulfide bridge. The helical transmembrane segment at 133 to 154 (IVISIDYYNMFTSIFTLTMMSV) threads the bilayer. The Cytoplasmic portion of the chain corresponds to 155–173 (DRYIAVCHPVKALDFRTPL). The helical transmembrane segment at 174–196 (KAKIINICIWLLSSSVGISAIIL) threads the bilayer. Over 197–222 (GGTKVREDVDIIECSLQFPDDDYSWW) the chain is Extracellular. The chain crosses the membrane as a helical span at residues 223–247 (DLFMKICVFVFAFVIPVLIIIVCYT). At 248–274 (LMILRLKSVRLLSGSREKDRNLRRITR) the chain is on the cytoplasmic side. The helical transmembrane segment at 275–296 (LVLVVVAVFIICWTPIHIFILV) threads the bilayer. Residues 297-311 (EALGSTSHSTAALSS) lie on the Extracellular side of the membrane. Residues 312 to 333 (YYFCIALGYTNSSLNPILYAFL) form a helical membrane-spanning segment. The Cytoplasmic portion of the chain corresponds to 334 to 380 (DENFKRCFRDFCFPIKMRMERQSTSRVRNTVQDPAYMRNVDGVNKPV). Cys345 carries the S-palmitoyl cysteine lipid modification.

It belongs to the G-protein coupled receptor 1 family. In terms of assembly, interacts with NHERF1. Interacts with GABARAPL1.

It is found in the cell membrane. G-protein coupled opioid receptor that functions as a receptor for endogenous alpha-neoendorphins and dynorphins, but has low affinity for beta-endorphins. Also functions as a receptor for various synthetic opioids and for the psychoactive diterpene salvinorin A. Ligand binding causes a conformation change that triggers signaling via guanine nucleotide-binding proteins (G proteins) and modulates the activity of down-stream effectors, such as adenylate cyclase. Signaling leads to the inhibition of adenylate cyclase activity. Inhibits neurotransmitter release by reducing calcium ion currents and increasing potassium ion conductance. Plays a role in the perception of pain. Plays a role in mediating reduced physical activity upon treatment with synthetic opioids. Plays a role in the regulation of salivation in response to synthetic opioids. May play a role in arousal and regulation of autonomic and neuroendocrine functions. In Cavia porcellus (Guinea pig), this protein is Kappa-type opioid receptor (OPRK1).